The chain runs to 28 residues: leu operon leader peptide (28 aa).

Its function is as follows. Involved in control of the biosynthesis of leucine. This Salmonella typhi protein is leu operon leader peptide (leuL).